Consider the following 341-residue polypeptide: Fructose-1,6-bisphosphatase, cytosolic (341 aa).

Mg(2+) contacts are provided by E71, E100, D121, L123, and D124. Substrate-binding positions include 124 to 127 (DGSF), N215, Y247, Y267, and K277. E283 lines the Mg(2+) pocket.

This sequence belongs to the FBPase class 1 family. Mg(2+) is required as a cofactor.

The protein localises to the cytoplasm. It catalyses the reaction beta-D-fructose 1,6-bisphosphate + H2O = beta-D-fructose 6-phosphate + phosphate. In Pisum sativum (Garden pea), this protein is Fructose-1,6-bisphosphatase, cytosolic.